A 600-amino-acid polypeptide reads, in one-letter code: Mediator of RNA polymerase II transcription subunit 26 (600 aa).

Residues Q10–A87 enclose the TFIIS N-terminal domain. Disordered stretches follow at residues G99 to E330, H348 to Y402, and T431 to K461. Basic and acidic residues predominate over residues S123–L133. Residues P175–D197 show a composition bias toward polar residues. Over residues S207–S218 the composition is skewed to basic and acidic residues. The span at S314–P324 shows a compositional bias: pro residues. Positions E441–K461 are enriched in basic and acidic residues. Residues S447, S470, and S535 each carry the phosphoserine modification.

It belongs to the Mediator complex subunit 26 family. Component of the Mediator complex, which is composed of MED1, MED4, MED6, MED7, MED8, MED9, MED10, MED11, MED12, MED13, MED13L, MED14, MED15, MED16, MED17, MED18, MED19, MED20, MED21, MED22, MED23, MED24, MED25, MED26, MED27, MED29, MED30, MED31, CCNC, CDK8 and CDC2L6/CDK11. The MED12, MED13, CCNC and CDK8 subunits form a distinct module termed the CDK8 module. Mediator containing the CDK8 module is less active than Mediator lacking this module in supporting transcriptional activation. Individual preparations of the Mediator complex lacking one or more distinct subunits have been variously termed ARC, CRSP, DRIP, PC2, SMCC and TRAP. Interacts with CEBPB (when not methylated).

Its subcellular location is the nucleus. Component of the Mediator complex, a coactivator involved in the regulated transcription of nearly all RNA polymerase II-dependent genes. Mediator functions as a bridge to convey information from gene-specific regulatory proteins to the basal RNA polymerase II transcription machinery. Mediator is recruited to promoters by direct interactions with regulatory proteins and serves as a scaffold for the assembly of a functional pre-initiation complex with RNA polymerase II and the general transcription factors. This Homo sapiens (Human) protein is Mediator of RNA polymerase II transcription subunit 26 (MED26).